A 352-amino-acid polypeptide reads, in one-letter code: Protein NDRG4 (352 aa).

Lysine 293, serine 298, serine 317, and serine 323 each carry phosphoserine. The segment at 301–352 is disordered; that stretch reads AVPSASMTRLARSRTASLTSASSVDGSRPQPCAHSDSSEGMGQVNHTMEVSC. Over residues 308 to 323 the composition is skewed to low complexity; that stretch reads TRLARSRTASLTSASS. Polar residues predominate over residues 338-352; sequence SEGMGQVNHTMEVSC.

The protein belongs to the NDRG family. Predominantly expressed in the brain (at protein level). Detected in neurons of various parts of brain, including the olfactory bulb, olfactory tuberculum, cerebral cortex, striatum, hippocampus, dentate gyrus, thalamus, hypothalamus, mesencephalon, cerebellum, pons and medulla oblongata.

It localises to the cytoplasm. The protein resides in the cytosol. Contributes to the maintenance of intracerebral BDNF levels within the normal range, which is necessary for the preservation of spatial learning and the resistance to neuronal cell death caused by ischemic stress. May enhance growth factor-induced ERK1 and ERK2 phosphorylation. May attenuate NGF-promoted ELK1 phosphorylation in a microtubule-dependent manner. This Mus musculus (Mouse) protein is Protein NDRG4 (Ndrg4).